Reading from the N-terminus, the 597-residue chain is Hydrogenase-1 large chain (597 aa).

Ni(2+)-binding residues include cysteine 76, cysteine 79, cysteine 576, and cysteine 579.

It belongs to the [NiFe]/[NiFeSe] hydrogenase large subunit family. In terms of assembly, heterodimer of a large and a small subunit. Requires Ni(2+) as cofactor.

The protein resides in the cell membrane. It carries out the reaction H2 + A = AH2. Functionally, this is one of three E.coli hydrogenases synthesized in response to different physiological conditions. HYD1 is believed to have a role in hydrogen cycling during fermentative growth. The polypeptide is Hydrogenase-1 large chain (hyaB) (Escherichia coli (strain K12)).